We begin with the raw amino-acid sequence, 595 residues long: uncharacterized protein (595 aa).

Disordered stretches follow at residues 50 to 159, 398 to 430, and 450 to 595; these read VNPS…KTKK, TYPT…PPSL, and VTEG…SLDK. The span at 83–122 shows a compositional bias: low complexity; that stretch reads SNKSSALKKSNKSSNKSSNKSSNKSSNKSSNKSSNKSSNK. The span at 123 to 132 shows a compositional bias: basic and acidic residues; that stretch reads FPDKSDKSDS. A compositionally biased stretch (acidic residues) spans 137-146; that stretch reads DNSDDSDDSS. Residues 398-409 show a composition bias toward low complexity; that stretch reads TYPTTPLFSEPT. The span at 410 to 420 shows a compositional bias: pro residues; it reads IPKPPQQPTTE. Residues 421 to 430 are compositionally biased toward low complexity; sequence PPSGFKPPSL. Residues 454–463 are compositionally biased toward basic and acidic residues; that stretch reads KVVESDDHTS. The span at 467 to 476 shows a compositional bias: pro residues; it reads IPPPPPPPPS. A compositionally biased stretch (low complexity) spans 477-529; the sequence is ISSDNSSPNKSVKSSTKSSTKSSTKSSTKSSTKSSTKSPSKTPVKSPIKSSSK. The segment covering 530–542 has biased composition (basic and acidic residues); it reads LSDKKSPTKKIES. A compositionally biased stretch (acidic residues) spans 544–553; it reads GESDSESDSE. The span at 559 to 570 shows a compositional bias: basic residues; that stretch reads TKKSTNKIKKIT. Positions 571 to 580 are enriched in low complexity; the sequence is NNKLENSNTK. Residues 581–595 show a composition bias toward basic residues; sequence NNKKFSKKKTISLDK.

This is an uncharacterized protein from Acanthamoeba polyphaga mimivirus (APMV).